The chain runs to 494 residues: MKYHDLRDFISLLEQRGELKRIKQEIDPDLEMTEIADRTLRAGGPALLFENPKGYSMPVLCNLFGTPDRVALGMGQEDVKALRDVGKLLAFLKEPEPPRGFRDFFDKMPQWKQVLNMPTKRLRNAPCQQQIWQGDDVDLTRIPVMKCWPGDAAPLVTWGLTVTRGPSKERQNLGIYRQQVIGKNKLIMRWLSHRGGALDFQEWCQQHPGERFPVSVALGADPATILGAVTPVPDTLSEYAFAGLLRGTKTEVVKCVSNDLEVPASAEIVLEGYIEPGEVAPEGPYGDHTGYYNEVDDFPVFTVTHITQRRDAIYHSTYTGRPPDEPAVLGVALNEVFVPILQKQFPEIVDFYLPPEGCSYRLAVVTIKKQYAGHAKRVMMGVWSFLRQFMYTKFVIVCDDDVNARDWNDVIWAITTRMDPARDTVLVENTPIDYLDFASPVSGLGSKMGMDATNKWPGETQREWGTPIRKDPAVVARIDAIWDELGILSDTPAR.

A Mn(2+)-binding site is contributed by asparagine 172. Residues 175–177, 189–191, and 194–195 contribute to the prenylated FMN site; these read IYR, RWL, and RG. Position 238 (glutamate 238) interacts with Mn(2+). The Proton donor role is filled by aspartate 287.

The protein belongs to the UbiD family. In terms of assembly, homohexamer. Prenylated FMN serves as cofactor. Mn(2+) is required as a cofactor.

It localises to the cell membrane. It carries out the reaction a 4-hydroxy-3-(all-trans-polyprenyl)benzoate + H(+) = a 2-(all-trans-polyprenyl)phenol + CO2. It functions in the pathway cofactor biosynthesis; ubiquinone biosynthesis. Catalyzes the decarboxylation of 3-octaprenyl-4-hydroxy benzoate to 2-octaprenylphenol, an intermediate step in ubiquinone biosynthesis. This is 3-octaprenyl-4-hydroxybenzoate carboxy-lyase from Erwinia tasmaniensis (strain DSM 17950 / CFBP 7177 / CIP 109463 / NCPPB 4357 / Et1/99).